Reading from the N-terminus, the 596-residue chain is Probable translation initiation factor IF-2 (596 aa).

The tr-type G domain maps to 3-220 (IRSPIVSVLG…MLLGLAQEYL (218 aa)). Residues 12–19 (GHVDHGKT) form a G1 region. 12–19 (GHVDHGKT) contacts GTP. The segment at 37-41 (GITQH) is G2. Residues 76–79 (DTPG) form a G3 region. GTP contacts are provided by residues 76–80 (DTPGH) and 130–133 (NKID). Residues 130 to 133 (NKID) form a G4 region. The interval 198-200 (SAK) is G5.

The protein belongs to the TRAFAC class translation factor GTPase superfamily. Classic translation factor GTPase family. IF-2 subfamily.

Function in general translation initiation by promoting the binding of the formylmethionine-tRNA to ribosomes. Seems to function along with eIF-2. The protein is Probable translation initiation factor IF-2 of Methanobrevibacter smithii (strain ATCC 35061 / DSM 861 / OCM 144 / PS).